The sequence spans 191 residues: Fe/S biogenesis protein NfuA (191 aa).

Residues C149 and C152 each coordinate [4Fe-4S] cluster.

Belongs to the NfuA family. Homodimer. [4Fe-4S] cluster serves as cofactor.

Involved in iron-sulfur cluster biogenesis. Binds a 4Fe-4S cluster, can transfer this cluster to apoproteins, and thereby intervenes in the maturation of Fe/S proteins. Could also act as a scaffold/chaperone for damaged Fe/S proteins. The protein is Fe/S biogenesis protein NfuA of Salmonella paratyphi A (strain ATCC 9150 / SARB42).